A 130-amino-acid polypeptide reads, in one-letter code: Large ribosomal subunit protein bL20 (130 aa).

Belongs to the bacterial ribosomal protein bL20 family.

Binds directly to 23S ribosomal RNA and is necessary for the in vitro assembly process of the 50S ribosomal subunit. It is not involved in the protein synthesizing functions of that subunit. This is Large ribosomal subunit protein bL20 from Salinispora arenicola (strain CNS-205).